Consider the following 299-residue polypeptide: Fluorinase (299 aa).

S-adenosyl-L-methionine contacts are provided by residues aspartate 16, 21 to 23 (DDS), tyrosine 77, serine 158, aspartate 210, asparagine 215, 269 to 270 (SR), and 277 to 279 (RNA).

As to quaternary structure, homohexamer; dimers of trimer.

The enzyme catalyses fluoride + S-adenosyl-L-methionine = 5'-deoxy-5'-fluoroadenosine + L-methionine. Its activity is regulated as follows. Competitively inhibited by S-adenosyl-L-homocysteine (AdoHcy) and S-adenosyl-L-homocysteine (SAH). Sinefungin is only weakly inhibitory. Functionally, involved in the biosynthesis of fluorometabolites. Catalyzes the formation of a C-F bond by combining S-adenosyl-L-methionine (SAM) and fluoride to generate 5'-fluoro-5'-deoxyadenosine (5'-FDA) and L-methionine. It can also use 2'-deoxyadenosine in place of adenosine as substrate. The chain is Fluorinase from Streptantibioticus cattleyicolor (Streptomyces cattleya).